The chain runs to 388 residues: Beta-hexosaminidase LpqI (388 aa).

A signal peptide spans 1–19 (MAFPRTLAILAAAAALVVA). The N-palmitoyl cysteine moiety is linked to residue Cys-20. A lipid anchor (S-diacylglycerol cysteine) is attached at Cys-20. Residues Asp-123, Arg-131, Arg-193, and 223–224 (KH) each bind substrate. Catalysis depends on His-236, which acts as the Proton donor/acceptor. The Nucleophile role is filled by Asp-311.

Belongs to the glycosyl hydrolase 3 family.

It is found in the cell inner membrane. It carries out the reaction Hydrolysis of terminal non-reducing N-acetyl-D-hexosamine residues in N-acetyl-beta-D-hexosaminides.. It participates in cell wall biogenesis; peptidoglycan recycling. In terms of biological role, plays a role in peptidoglycan recycling by cleaving the terminal beta-1,4-linked N-acetylglucosamine (GlcNAc) from peptidoglycan fragments. Acts as a regulator for GlcNAc-MurNAc levels by cleaving disaccharides and allowing the breakdown of MurNAc. The polypeptide is Beta-hexosaminidase LpqI (Mycobacterium bovis (strain BCG / Pasteur 1173P2)).